Reading from the N-terminus, the 168-residue chain is Plastocyanin, chloroplastic (168 aa).

A chloroplast-targeting transit peptide spans 1-70 (MASVAAAAVS…SSLLLVASAN (70 aa)). Residues 71–168 (AATVKMGGDD…AGMKGVVTVS (98 aa)) form the Plastocyanin-like domain. Positions 108, 153, 156, and 161 each coordinate Cu cation.

Belongs to the plastocyanin family. Cu(2+) is required as a cofactor.

The protein localises to the plastid. It is found in the chloroplast thylakoid membrane. Its function is as follows. Participates in electron transfer between P700 and the cytochrome b6-f complex in photosystem I. The chain is Plastocyanin, chloroplastic (PETE) from Physcomitrium patens (Spreading-leaved earth moss).